Reading from the N-terminus, the 486-residue chain is MTFQAIATHPQDWTGDTLALGLTTAAIGETLSSELQKLDQQWNGVLQELISDSEFKAKLAETTTTRIGGSIRKLILVGLGESPTTEDYRRAAAAVAKQARSFKSQTLAIAFPPSDDPAAIASAIVEGISLALYKDQRFKSEPDTASGPSSIELLGLAGQEAAIARAEQVVAGVELARQLVAAPANVVTPVTMADTAQELAAELGLELEILEADECEKRGMGAFLGVAKASDLPPKFIHLTYRPESTPRRKLAIVGKGLTFDSGGYNIKGAGSGIEMMKTDMGGAAATLGAAKAIGLIKPDVEVHFISAVTENMISGRGMHPGDILTASNGKTIEVNNTDAEGRLTLADALVFADGLGVDAIVDLATLTGACIIALGDDIAGLWSPSDDLAEQLLQAGKAAGEKLWRLPLEEPYLDGLKSPVADYKNTGPRAGGSITAALFLKQFVKHPVWAHLDVAGPVWSDKEKHYNPAGATGYGVRTLVNWVLS.

The protein belongs to the peptidase M17 family. Requires Mn(2+) as cofactor.

The protein resides in the cytoplasm. It catalyses the reaction Release of an N-terminal amino acid, Xaa-|-Yaa-, in which Xaa is preferably Leu, but may be other amino acids including Pro although not Arg or Lys, and Yaa may be Pro. Amino acid amides and methyl esters are also readily hydrolyzed, but rates on arylamides are exceedingly low.. It carries out the reaction Release of an N-terminal amino acid, preferentially leucine, but not glutamic or aspartic acids.. Functionally, presumably involved in the processing and regular turnover of intracellular proteins. Catalyzes the removal of unsubstituted N-terminal amino acids from various peptides. This chain is Probable cytosol aminopeptidase (pepA), found in Synechococcus elongatus (strain ATCC 33912 / PCC 7942 / FACHB-805) (Anacystis nidulans R2).